A 239-amino-acid polypeptide reads, in one-letter code: Putative 3-methyladenine DNA glycosylase (239 aa).

This sequence belongs to the DNA glycosylase MPG family.

The chain is Putative 3-methyladenine DNA glycosylase from Pseudomonas aeruginosa (strain UCBPP-PA14).